Consider the following 612-residue polypeptide: MSQFNAKAFLADVPHLPGVYRMYDANQAIIYVGKAKDLKKRLASYFRSQVASKKIEALVGNIHHIDTTITHSETEALLLEHNYIKQHQPKYNVLLRDDKSYPYLLLTKHQHPRLTAFRGSKKVAGEYFGPYPNVSAVRESLNLLQKIFPIRQCEDNYYKNRSRPCLQHQIGRCLAPCVTGYCSQQEYDNQVKWVRLFLQGKDSQVIDYLMQKMEIAASELDFETAARFRDQIQSVRAVQEKQFVANQRLDDLDIISIAYQSGLACAHILFIRQGKVLGNRAYFPKVPSHTDLTELADTFIGQFYLQLNQHRSIPNQIILDQPLTESNALAQLLTEQAGHKVTIITNHVRGDKSRYLALAQTNARAALSLQLKQSTTIHKRYDALKILLKLPTIKRMECFDISHTMGSQTVASCVVFDENGPLKSDYRRFNIEGITGGDDYAGMEQALVKRYDKPLPIEKIPDIIFIDGGKGQLNRALQVFEKLTVAWDKHKPLLIGVAKGAERKAGLETLIIGRLKKEIHLPIDSPALHLIQHIRDESHHHAISGHRKKRQKAFVESGLESIAGVGAKRRQALLKYLGGMQGVKSATLAEIESVPGISKTLAGVIFDTLHNS.

Residues His-15 to Val-93 form the GIY-YIG domain. Residues Ser-203 to Val-238 form the UVR domain.

This sequence belongs to the UvrC family. As to quaternary structure, interacts with UvrB in an incision complex.

Its subcellular location is the cytoplasm. Its function is as follows. The UvrABC repair system catalyzes the recognition and processing of DNA lesions. UvrC both incises the 5' and 3' sides of the lesion. The N-terminal half is responsible for the 3' incision and the C-terminal half is responsible for the 5' incision. The sequence is that of UvrABC system protein C from Haemophilus ducreyi (strain 35000HP / ATCC 700724).